A 124-amino-acid chain; its full sequence is UPF0225 protein SCO1677 (124 aa).

It belongs to the UPF0225 family.

This Streptomyces coelicolor (strain ATCC BAA-471 / A3(2) / M145) protein is UPF0225 protein SCO1677.